The sequence spans 262 residues: Cyclin-dependent kinase inhibitor 1 (262 aa).

The interval serine 140–isoleucine 212 is disordered. Residues serine 160 to threonine 169 show a composition bias toward basic and acidic residues. Positions serine 198–threonine 208 are enriched in low complexity.

It belongs to the CDI family. ICK/KRP subfamily.

The polypeptide is Cyclin-dependent kinase inhibitor 1 (KRP1) (Oryza sativa subsp. indica (Rice)).